Consider the following 534-residue polypeptide: Ankyrin repeat domain-containing protein 34C (534 aa).

ANK repeat units follow at residues 10–39, 43–80, 84–114, and 118–147; these read TDGN…YINE, KGET…DPNI, SGKT…DPSL, and TGAS…AKGK. Residues 159-205 form a disordered region; the sequence is SGTKTTKQYLNVPPSPKVEDRQSPPLCTTPSDVELKTSGLASPPSEK. At S301 the chain carries Phosphoserine. Disordered regions lie at residues 332–368 and 384–403; these read YEKG…LKDP and QPVG…GPLD. A Phosphoserine modification is found at S446. Positions 480 to 503 are disordered; sequence SKPASPLASGLKSMAPVAPNSPKR.

This sequence belongs to the ANKRD34 family.

This chain is Ankyrin repeat domain-containing protein 34C (Ankrd34c), found in Mus musculus (Mouse).